A 393-amino-acid chain; its full sequence is Stearoyl-[acyl-carrier-protein] 9-desaturase, chloroplastic (393 aa).

The N-terminal 30 residues, 1–30 (MALNFNSPTFQSIKTTRRPCSPLRSPRVFM), are a transit peptide targeting the chloroplast. Fe cation-binding residues include Glu-135, Glu-173, His-176, Glu-226, Glu-259, and His-262.

The protein belongs to the fatty acid desaturase type 2 family. As to quaternary structure, homodimer. Fe(2+) serves as cofactor.

The protein resides in the plastid. It localises to the chloroplast. It carries out the reaction octadecanoyl-[ACP] + 2 reduced [2Fe-2S]-[ferredoxin] + O2 + 2 H(+) = (9Z)-octadecenoyl-[ACP] + 2 oxidized [2Fe-2S]-[ferredoxin] + 2 H2O. Its pathway is lipid metabolism; fatty acid metabolism. Functionally, converts stearoyl-ACP to oleoyl-ACP by introduction of a cis double bond between carbons 9 and 10 of the acyl chain. In Solanum commersonii (Commerson's wild potato), this protein is Stearoyl-[acyl-carrier-protein] 9-desaturase, chloroplastic.